The sequence spans 417 residues: Lipoyl synthase, mitochondrial (417 aa).

The tract at residues 35 to 56 (EANPTDLAGLKRKAKRRPTKLA) is disordered. Positions 44–53 (LKRKAKRRPT) are enriched in basic residues. [4Fe-4S] cluster is bound by residues C122, C127, C133, C152, C156, C159, and S367. Residues 137 to 356 (KKSEATATIM…RDKALEMGFL (220 aa)) form the Radical SAM core domain. Residues 389 to 417 (IEEQQHDKENNNLLLSKEDEKTTQEKANF) form a disordered region. Basic and acidic residues predominate over residues 391–417 (EQQHDKENNNLLLSKEDEKTTQEKANF).

It belongs to the radical SAM superfamily. Lipoyl synthase family. [4Fe-4S] cluster serves as cofactor.

The protein resides in the mitochondrion. The catalysed reaction is [[Fe-S] cluster scaffold protein carrying a second [4Fe-4S](2+) cluster] + N(6)-octanoyl-L-lysyl-[protein] + 2 oxidized [2Fe-2S]-[ferredoxin] + 2 S-adenosyl-L-methionine + 4 H(+) = [[Fe-S] cluster scaffold protein] + N(6)-[(R)-dihydrolipoyl]-L-lysyl-[protein] + 4 Fe(3+) + 2 hydrogen sulfide + 2 5'-deoxyadenosine + 2 L-methionine + 2 reduced [2Fe-2S]-[ferredoxin]. The protein operates within protein modification; protein lipoylation via endogenous pathway; protein N(6)-(lipoyl)lysine from octanoyl-[acyl-carrier-protein]: step 2/2. Functionally, catalyzes the radical-mediated insertion of two sulfur atoms into the C-6 and C-8 positions of the octanoyl moiety bound to the lipoyl domains of lipoate-dependent enzymes, thereby converting the octanoylated domains into lipoylated derivatives. This chain is Lipoyl synthase, mitochondrial, found in Komagataella phaffii (strain GS115 / ATCC 20864) (Yeast).